Reading from the N-terminus, the 302-residue chain is MTDIAPDTGVLDDVVSAFQIENLPVRGRVVRLGAAIDEVLTRHDYPEPVANLLGEACALAALVGSSLKFEGRLIVQAQGDGPVRYVVVDYDTSGGLRGYCRFDPEEVAAVSEGFVRPGAKTLLGGGVFIMTLDQGPDMDRYQGVTPIEGETLALCAEQYFAQSEQTPTRVRLAVGQADTGQGATWRAGGILIQVIAGDQARGETQDAWTHVQALFETTGEDELIDPTVSTPTLLWRLFNEDGVRLLDEKPLKAFCRCSEDRIGVVMDSFSAEEVAEMVEPDGKIHVTCEYCSRIYKLDPPGA.

Intrachain disulfides connect Cys-255–Cys-257 and Cys-288–Cys-291.

This sequence belongs to the HSP33 family. In terms of processing, under oxidizing conditions two disulfide bonds are formed involving the reactive cysteines. Under reducing conditions zinc is bound to the reactive cysteines and the protein is inactive.

Its subcellular location is the cytoplasm. Redox regulated molecular chaperone. Protects both thermally unfolding and oxidatively damaged proteins from irreversible aggregation. Plays an important role in the bacterial defense system toward oxidative stress. The chain is 33 kDa chaperonin from Caulobacter vibrioides (strain ATCC 19089 / CIP 103742 / CB 15) (Caulobacter crescentus).